Reading from the N-terminus, the 766-residue chain is Coenzyme PQQ synthesis protein F (766 aa).

Position 49 (His49) interacts with Zn(2+). Glu52 serves as the catalytic Proton acceptor. His53 and Glu130 together coordinate Zn(2+).

This sequence belongs to the peptidase M16 family. Zn(2+) is required as a cofactor.

It participates in cofactor biosynthesis; pyrroloquinoline quinone biosynthesis. In terms of biological role, required for coenzyme pyrroloquinoline quinone (PQQ) biosynthesis. It is thought that this protein is a protease that cleaves peptides bond in a small peptide (gene pqqA), providing the glutamate and tyrosine residues which are necessary for the synthesis of PQQ. In Pseudomonas putida (strain ATCC 47054 / DSM 6125 / CFBP 8728 / NCIMB 11950 / KT2440), this protein is Coenzyme PQQ synthesis protein F (pqqF).